Reading from the N-terminus, the 498-residue chain is ATP synthase subunit beta, chloroplastic (498 aa).

ATP is bound at residue 172-179 (GGAGVGKT).

This sequence belongs to the ATPase alpha/beta chains family. As to quaternary structure, F-type ATPases have 2 components, CF(1) - the catalytic core - and CF(0) - the membrane proton channel. CF(1) has five subunits: alpha(3), beta(3), gamma(1), delta(1), epsilon(1). CF(0) has four main subunits: a(1), b(1), b'(1) and c(9-12).

The protein localises to the plastid. It localises to the chloroplast thylakoid membrane. It catalyses the reaction ATP + H2O + 4 H(+)(in) = ADP + phosphate + 5 H(+)(out). Functionally, produces ATP from ADP in the presence of a proton gradient across the membrane. The catalytic sites are hosted primarily by the beta subunits. This Elaeis oleifera (American oil palm) protein is ATP synthase subunit beta, chloroplastic.